A 694-amino-acid polypeptide reads, in one-letter code: MAREYKIEDYRNFGIMAHIDAGKTTMTERILFYTGKNHKIGETHDGASTMDWMEQEQERGITITSAATTTFWQGQDGKKRRFNIIDTPGHVDFTIEVERSLRVLDGAIALLDANAGVEPQTETVWRQAEKYHVPRMVFVNKMDKIGADFYRCVEMVGSRLGAVALPVQLPIGAENEFEGVIDLIEMKALTWDGTIGAAATVGEIPEHLKDQAEEYREKLIELAVEIDEAAMEAYLEGTMPTNEQLRALIRKGTIEVKFHPILCGTAFKNRGVQPLLDAVVEFLPAPTDVPAIKGIDVKTETETTRESSDEAPLSMLAFKIMNDPFVGSLTFARIYSGKLTKGVSLENTVKGKRERIGRMLQMHSNSREDIEEAFAGDIVALAGLKETTTGDTLCDPLKPVILERMEFPDPVIEIAIEPKTKADQEKMGIALNRLAAEDPSFRVKSDEESGQTIIAGMGELHLDILVDRMKREFKVEANVGAPQVAYRESITRQAEIDYTHKKQSGGSGQFARVKIIFEPHDGDDFIFESKIVGGSVPKEYIPGVQKGIESVMGAGPLAGFPMLGVKATLIDGAYHDVDSSVLAFEIASRAAFREGAQKAGAQLLEPIMKVEVVTPEDYVGDVIGDLNSRRGQISGTEARGIATVVNANVPLANMFGYVNNLRSMSQGRAQYTMQFDHYEPVPTAVAQEIQKKFA.

One can recognise a tr-type G domain in the interval 8-287 (EDYRNFGIMA…AVVEFLPAPT (280 aa)). Residues 17–24 (AHIDAGKT), 86–90 (DTPGH), and 140–143 (NKMD) contribute to the GTP site.

It belongs to the TRAFAC class translation factor GTPase superfamily. Classic translation factor GTPase family. EF-G/EF-2 subfamily.

The protein resides in the cytoplasm. Functionally, catalyzes the GTP-dependent ribosomal translocation step during translation elongation. During this step, the ribosome changes from the pre-translocational (PRE) to the post-translocational (POST) state as the newly formed A-site-bound peptidyl-tRNA and P-site-bound deacylated tRNA move to the P and E sites, respectively. Catalyzes the coordinated movement of the two tRNA molecules, the mRNA and conformational changes in the ribosome. In Brucella anthropi (strain ATCC 49188 / DSM 6882 / CCUG 24695 / JCM 21032 / LMG 3331 / NBRC 15819 / NCTC 12168 / Alc 37) (Ochrobactrum anthropi), this protein is Elongation factor G.